The following is a 126-amino-acid chain: uncharacterized protein (126 aa).

The next 2 membrane-spanning stretches (helical) occupy residues 40-57 (IDKWILGALAFVFAVSFF) and 72-94 (ILIAIGIFATFEIAIILAVILGG).

The protein resides in the cell membrane. This is an uncharacterized protein from Pasteurella multocida (strain Pm70).